A 1073-amino-acid chain; its full sequence is Carbamoyl phosphate synthase large chain (1073 aa).

The carboxyphosphate synthetic domain stretch occupies residues 2 to 403 (PKRTDIKSIL…SLQKALRGLE (402 aa)). ATP contacts are provided by Arg-129, Arg-169, Gly-175, Gly-176, Glu-208, Leu-210, Glu-215, Gly-241, Ile-242, His-243, Gln-285, and Glu-299. Positions 133–328 (DVAMKKIGLE…IAKVAAKLAV (196 aa)) constitute an ATP-grasp 1 domain. Residues Gln-285, Glu-299, and Asn-301 each contribute to the Mg(2+) site. Residues Gln-285, Glu-299, and Asn-301 each contribute to the Mn(2+) site. Residues 404-553 (VGATGFDPKV…YSTYEEECEA (150 aa)) form an oligomerization domain region. Positions 554–936 (NPSTDREKIM…AFAKAQLGSN (383 aa)) are carbamoyl phosphate synthetic domain. Residues 679-870 (QHAVERLKLK…LAKVAARVMA (192 aa)) enclose the ATP-grasp 2 domain. Arg-715, His-754, Leu-756, Glu-761, Gly-786, Val-787, His-788, Ser-789, Gln-829, and Glu-841 together coordinate ATP. Mg(2+) contacts are provided by Gln-829, Glu-841, and Asn-843. Residues Gln-829, Glu-841, and Asn-843 each coordinate Mn(2+). The 137-residue stretch at 937–1073 (STMKKHGRAL…SVQEMHAQIK (137 aa)) folds into the MGS-like domain. Residues 937-1073 (STMKKHGRAL…SVQEMHAQIK (137 aa)) form an allosteric domain region.

Belongs to the CarB family. As to quaternary structure, composed of two chains; the small (or glutamine) chain promotes the hydrolysis of glutamine to ammonia, which is used by the large (or ammonia) chain to synthesize carbamoyl phosphate. Tetramer of heterodimers (alpha,beta)4. Mg(2+) serves as cofactor. It depends on Mn(2+) as a cofactor.

It catalyses the reaction hydrogencarbonate + L-glutamine + 2 ATP + H2O = carbamoyl phosphate + L-glutamate + 2 ADP + phosphate + 2 H(+). It carries out the reaction hydrogencarbonate + NH4(+) + 2 ATP = carbamoyl phosphate + 2 ADP + phosphate + 2 H(+). Its pathway is amino-acid biosynthesis; L-arginine biosynthesis; carbamoyl phosphate from bicarbonate: step 1/1. It functions in the pathway pyrimidine metabolism; UMP biosynthesis via de novo pathway; (S)-dihydroorotate from bicarbonate: step 1/3. Its function is as follows. Large subunit of the glutamine-dependent carbamoyl phosphate synthetase (CPSase). CPSase catalyzes the formation of carbamoyl phosphate from the ammonia moiety of glutamine, carbonate, and phosphate donated by ATP, constituting the first step of 2 biosynthetic pathways, one leading to arginine and/or urea and the other to pyrimidine nucleotides. The large subunit (synthetase) binds the substrates ammonia (free or transferred from glutamine from the small subunit), hydrogencarbonate and ATP and carries out an ATP-coupled ligase reaction, activating hydrogencarbonate by forming carboxy phosphate which reacts with ammonia to form carbamoyl phosphate. This chain is Carbamoyl phosphate synthase large chain, found in Escherichia coli O6:H1 (strain CFT073 / ATCC 700928 / UPEC).